The primary structure comprises 433 residues: Enolase (433 aa).

Gln163 is a binding site for (2R)-2-phosphoglycerate. Glu205 acts as the Proton donor in catalysis. Residues Asp242, Glu291, and Asp318 each coordinate Mg(2+). Positions 343, 372, 373, and 394 each coordinate (2R)-2-phosphoglycerate. The active-site Proton acceptor is Lys343.

Belongs to the enolase family. It depends on Mg(2+) as a cofactor.

The protein localises to the cytoplasm. The protein resides in the secreted. Its subcellular location is the cell surface. The catalysed reaction is (2R)-2-phosphoglycerate = phosphoenolpyruvate + H2O. The protein operates within carbohydrate degradation; glycolysis; pyruvate from D-glyceraldehyde 3-phosphate: step 4/5. In terms of biological role, catalyzes the reversible conversion of 2-phosphoglycerate (2-PG) into phosphoenolpyruvate (PEP). It is essential for the degradation of carbohydrates via glycolysis. The polypeptide is Enolase (Methylibium petroleiphilum (strain ATCC BAA-1232 / LMG 22953 / PM1)).